A 138-amino-acid polypeptide reads, in one-letter code: Flagellar assembly factor FliW (138 aa).

The protein belongs to the FliW family. As to quaternary structure, interacts with translational regulator CsrA and flagellin(s).

Its subcellular location is the cytoplasm. Acts as an anti-CsrA protein, binds CsrA and prevents it from repressing translation of its target genes, one of which is flagellin. Binds to flagellin and participates in the assembly of the flagellum. The sequence is that of Flagellar assembly factor FliW from Symbiobacterium thermophilum (strain DSM 24528 / JCM 14929 / IAM 14863 / T).